Here is a 264-residue protein sequence, read N- to C-terminus: 3-methyl-2-oxobutanoate hydroxymethyltransferase (264 aa).

Residues aspartate 45 and aspartate 84 each coordinate Mg(2+). 3-methyl-2-oxobutanoate contacts are provided by residues 45 to 46, aspartate 84, and lysine 112; that span reads DS. Glutamate 114 is a Mg(2+) binding site. Glutamate 181 serves as the catalytic Proton acceptor.

It belongs to the PanB family. As to quaternary structure, homodecamer; pentamer of dimers. Requires Mg(2+) as cofactor.

The protein resides in the cytoplasm. The catalysed reaction is 3-methyl-2-oxobutanoate + (6R)-5,10-methylene-5,6,7,8-tetrahydrofolate + H2O = 2-dehydropantoate + (6S)-5,6,7,8-tetrahydrofolate. Its pathway is cofactor biosynthesis; (R)-pantothenate biosynthesis; (R)-pantoate from 3-methyl-2-oxobutanoate: step 1/2. Its function is as follows. Catalyzes the reversible reaction in which hydroxymethyl group from 5,10-methylenetetrahydrofolate is transferred onto alpha-ketoisovalerate to form ketopantoate. The protein is 3-methyl-2-oxobutanoate hydroxymethyltransferase of Shewanella frigidimarina (strain NCIMB 400).